Reading from the N-terminus, the 215-residue chain is Probable maleylacetoacetate isomerase (215 aa).

One can recognise a GST N-terminal domain in the interval 2-85 (MSLILYGYWR…YLDETYPAPR (84 aa)). One can recognise a GST C-terminal domain in the interval 90 to 215 (RGAERYQVKA…AAPENQPDAC (126 aa)).

This sequence belongs to the GST superfamily. Zeta family.

It carries out the reaction 4-maleylacetoacetate = 4-fumarylacetoacetate. It functions in the pathway amino-acid degradation; L-phenylalanine degradation; acetoacetate and fumarate from L-phenylalanine: step 5/6. This Vibrio cholerae serotype O1 (strain ATCC 39315 / El Tor Inaba N16961) protein is Probable maleylacetoacetate isomerase (maiA).